Consider the following 159-residue polypeptide: Small ribosomal subunit protein uS17 (159 aa).

The protein belongs to the universal ribosomal protein uS17 family.

The protein resides in the cytoplasm. The chain is Small ribosomal subunit protein uS17 (RPS11) from Zea mays (Maize).